Here is a 265-residue protein sequence, read N- to C-terminus: ClpXP adapter protein SpxH (265 aa).

It belongs to the SpxH family. Interacts with Spx.

Its subcellular location is the cytoplasm. Its function is as follows. Adapter protein required for efficient degradation of Spx by ClpXP under non-stress conditions. Interaction with Spx stabilizes Spx and exposes the C-terminus of Spx for recognition and proteolysis by ClpXP. In Staphylococcus epidermidis (strain ATCC 35984 / DSM 28319 / BCRC 17069 / CCUG 31568 / BM 3577 / RP62A), this protein is ClpXP adapter protein SpxH.